We begin with the raw amino-acid sequence, 173 residues long: Crossover junction endodeoxyribonuclease RuvC (173 aa).

Residues D8, E67, and D139 contribute to the active site. Mg(2+)-binding residues include D8, E67, and D139.

It belongs to the RuvC family. Homodimer which binds Holliday junction (HJ) DNA. The HJ becomes 2-fold symmetrical on binding to RuvC with unstacked arms; it has a different conformation from HJ DNA in complex with RuvA. In the full resolvosome a probable DNA-RuvA(4)-RuvB(12)-RuvC(2) complex forms which resolves the HJ. Mg(2+) serves as cofactor.

Its subcellular location is the cytoplasm. The catalysed reaction is Endonucleolytic cleavage at a junction such as a reciprocal single-stranded crossover between two homologous DNA duplexes (Holliday junction).. Its function is as follows. The RuvA-RuvB-RuvC complex processes Holliday junction (HJ) DNA during genetic recombination and DNA repair. Endonuclease that resolves HJ intermediates. Cleaves cruciform DNA by making single-stranded nicks across the HJ at symmetrical positions within the homologous arms, yielding a 5'-phosphate and a 3'-hydroxyl group; requires a central core of homology in the junction. The consensus cleavage sequence is 5'-(A/T)TT(C/G)-3'. Cleavage occurs on the 3'-side of the TT dinucleotide at the point of strand exchange. HJ branch migration catalyzed by RuvA-RuvB allows RuvC to scan DNA until it finds its consensus sequence, where it cleaves and resolves the cruciform DNA. This chain is Crossover junction endodeoxyribonuclease RuvC, found in Vibrio parahaemolyticus serotype O3:K6 (strain RIMD 2210633).